Here is a 488-residue protein sequence, read N- to C-terminus: Transmembrane protein 39A (488 aa).

2 N-linked (GlcNAc...) asparagine glycosylation sites follow: Asn31 and Asn39. The next 8 helical transmembrane spans lie at 72-92 (SLLFEFLFFIYLLVALFIQYI), 110-130 (TSLNFHLIDYHLAAFITVMLA), 154-174 (VLISARLVLLTLCGWVLCWTL), 182-202 (SVLNLLFLGYPFGVYVPLCCF), 287-307 (EVLFNSLFSAYYVAFLPLCFV), 319-339 (CEHLIMVWINAFVMLTTQLLP), 420-440 (LLNLLILIEGSVVFYQLYSLL), and 446-466 (NHTLSMALILFCNYYVLFKLL).

Belongs to the TMEM39 family. Interacts with SACM1L, SEC23A and SEC24A.

Its subcellular location is the endoplasmic reticulum membrane. In terms of biological role, regulates autophagy by controlling the spatial distribution and levels of the intracellular phosphatidylinositol 4-phosphate (PtdIns(4)P) pools. Modulates (PtdIns(4)P) levels by regulating the ER-to-Golgi trafficking of the phosphatidylinositide phosphatase SACM1L. This is Transmembrane protein 39A (TMEM39A) from Bos taurus (Bovine).